Reading from the N-terminus, the 117-residue chain is Aspartate 1-decarboxylase (117 aa).

S25 acts as the Schiff-base intermediate with substrate; via pyruvic acid in catalysis. S25 is modified (pyruvic acid (Ser)). T57 contacts substrate. The active-site Proton donor is Y58. Position 73-75 (73-75 (GAA)) interacts with substrate.

It belongs to the PanD family. As to quaternary structure, heterooctamer of four alpha and four beta subunits. It depends on pyruvate as a cofactor. In terms of processing, is synthesized initially as an inactive proenzyme, which is activated by self-cleavage at a specific serine bond to produce a beta-subunit with a hydroxyl group at its C-terminus and an alpha-subunit with a pyruvoyl group at its N-terminus.

The protein localises to the cytoplasm. The catalysed reaction is L-aspartate + H(+) = beta-alanine + CO2. It functions in the pathway cofactor biosynthesis; (R)-pantothenate biosynthesis; beta-alanine from L-aspartate: step 1/1. Its function is as follows. Catalyzes the pyruvoyl-dependent decarboxylation of aspartate to produce beta-alanine. The sequence is that of Aspartate 1-decarboxylase from Bacteroides fragilis (strain ATCC 25285 / DSM 2151 / CCUG 4856 / JCM 11019 / LMG 10263 / NCTC 9343 / Onslow / VPI 2553 / EN-2).